A 2457-amino-acid polypeptide reads, in one-letter code: Large tegument protein deneddylase (2457 aa).

The segment at 1 to 234 (MALPASLAGF…SDLHGSKIIL (234 aa)) is deubiquitination activity. Residues 13-224 (EGTASTNQAD…IMSHYKVISF (212 aa)) enclose the Peptidase C76 domain. Catalysis depends on residues cysteine 33, aspartate 163, and histidine 165. 4 disordered regions span residues 281-350 (EEWT…LPSV), 2064-2131 (ITEG…PIIP), 2164-2360 (GHSG…PQPQ), and 2387-2407 (GMSD…GVTH). Residues 293 to 302 (SGRTPPEKMT) show a composition bias toward basic and acidic residues. Acidic residues predominate over residues 314 to 334 (TMDDDVIDLTGDDDMEDESEG). Positions 2080–2091 (TQDHMEEPDNKQ) are enriched in basic and acidic residues. Residues 2115–2131 (SPSPSPPVLTPIKPIIP) are compositionally biased toward pro residues. The segment covering 2173–2186 (HIQSSTPGPAQNTR) has biased composition (polar residues). The segment covering 2387–2398 (GMSDDKNPEPCV) has biased composition (basic and acidic residues).

It belongs to the herpesviridae large tegument protein family. As to quaternary structure, interacts with host CUL1 and CUL4A; these interactions inhibit the E3 ligase activity of cullins. Interacts with inner tegument protein. Interacts with capsid vertex specific component CVC2. Interacts with the major capsid protein/MCP.

Its subcellular location is the virion tegument. The protein resides in the host cytoplasm. It localises to the host nucleus. It carries out the reaction Thiol-dependent hydrolysis of ester, thioester, amide, peptide and isopeptide bonds formed by the C-terminal Gly of ubiquitin (a 76-residue protein attached to proteins as an intracellular targeting signal).. Functionally, large tegument protein that plays multiple roles in the viral cycle. During viral entry, remains associated with the capsid while most of the tegument is detached and participates in the capsid transport toward the host nucleus. Plays a role in the routing of the capsid at the nuclear pore complex and subsequent uncoating. Within the host nucleus, acts as a deneddylase and promotes the degradation of nuclear CRLs (cullin-RING ubiquitin ligases) and thereby stabilizes nuclear CRL substrates, while cytoplasmic CRLs remain unaffected. These modifications prevent host cell cycle S-phase progression and create a favorable environment allowing efficient viral genome replication. Participates later in the secondary envelopment of capsids. Indeed, plays a linker role for the association of the outer viral tegument to the capsids together with the inner tegument protein. This chain is Large tegument protein deneddylase, found in Apodemus sylvaticus (European woodmouse).